Here is a 68-residue protein sequence, read N- to C-terminus: Conotoxin Mr3.4 (68 aa).

An N-terminal signal peptide occupies residues 1-19; the sequence is MSKLGVLLTICLLLFPLTA. Residues 20–49 constitute a propeptide that is removed on maturation; sequence VPLDGDQPADRPAERMQDDISSERHPFFDR. 3 cysteine pairs are disulfide-bonded: Cys-53–Cys-67, Cys-54–Cys-63, and Cys-59–Cys-66. A 4-hydroxyproline modification is found at Pro-65.

The protein belongs to the conotoxin M superfamily. As to expression, expressed by the venom duct.

It localises to the secreted. The polypeptide is Conotoxin Mr3.4 (Conus marmoreus (Marble cone)).